A 32-amino-acid chain; its full sequence is Photosystem II reaction center protein T (32 aa).

A helical membrane pass occupies residues Ser3–Phe23.

The protein belongs to the PsbT family. PSII is composed of 1 copy each of membrane proteins PsbA, PsbB, PsbC, PsbD, PsbE, PsbF, PsbH, PsbI, PsbJ, PsbK, PsbL, PsbM, PsbT, PsbX, PsbY, PsbZ, Psb30/Ycf12, peripheral proteins PsbO, CyanoQ (PsbQ), PsbU, PsbV and a large number of cofactors. It forms dimeric complexes.

The protein resides in the cellular thylakoid membrane. Functionally, found at the monomer-monomer interface of the photosystem II (PS II) dimer, plays a role in assembly and dimerization of PSII. PSII is a light-driven water plastoquinone oxidoreductase, using light energy to abstract electrons from H(2)O, generating a proton gradient subsequently used for ATP formation. This chain is Photosystem II reaction center protein T, found in Cyanothece sp. (strain PCC 7425 / ATCC 29141).